Here is an 89-residue protein sequence, read N- to C-terminus: Large ribosomal subunit protein eL34 (89 aa).

Residues 41-69 (RPLNGVPRGRPSELRKLPKTAKRPERPYP) are disordered. Over residues 50 to 66 (RPSELRKLPKTAKRPER) the composition is skewed to basic and acidic residues.

This sequence belongs to the eukaryotic ribosomal protein eL34 family.

In Thermococcus gammatolerans (strain DSM 15229 / JCM 11827 / EJ3), this protein is Large ribosomal subunit protein eL34.